Here is a 207-residue protein sequence, read N- to C-terminus: Putative 3-methyladenine DNA glycosylase (207 aa).

The protein belongs to the DNA glycosylase MPG family.

The polypeptide is Putative 3-methyladenine DNA glycosylase (Listeria monocytogenes serovar 1/2a (strain ATCC BAA-679 / EGD-e)).